Consider the following 147-residue polypeptide: MKTFSAKPADVTHEWFVIDATDKVLGRVASEVALRLRGKHKAIYTPHVDTGDFIVIINAAQLRVTGAKSTDKIYYRHSGYPGGITATNFRDMQTKFPGRALEKAVKGMLPKGPLGYAMIKKLKVYGGAEHPHTAQQPKVLEIAGAAK.

The protein belongs to the universal ribosomal protein uL13 family. In terms of assembly, part of the 50S ribosomal subunit.

Functionally, this protein is one of the early assembly proteins of the 50S ribosomal subunit, although it is not seen to bind rRNA by itself. It is important during the early stages of 50S assembly. This chain is Large ribosomal subunit protein uL13, found in Polaromonas naphthalenivorans (strain CJ2).